The chain runs to 152 residues: MEASPKKPEALQRPDIKQQSFAEIYGVPENFLEIEVRSPQTHGIARKMYTDYEIVCRTNIPVFKLKSSVVRRRYSDFECFREILERESTRVSIPSLPGKVFTNRFSDEVIEARREGLEKFLQTVAGHPLLQTGSKVLCAFIQDPQWDKNQWI.

The PX domain maps to asparagine 30–aspartate 147. The a 1,2-diacyl-sn-glycero-3-phospho-(1D-myo-inositol-3-phosphate) site is built by arginine 73, serine 75, lysine 99, arginine 104, and arginine 113.

The protein belongs to the sorting nexin family.

Its subcellular location is the cytoplasm. It localises to the golgi apparatus membrane. The protein resides in the prevacuolar compartment membrane. In terms of biological role, required for retention of late Golgi membrane proteins. Component of the retrieval machinery that functions by direct interaction with the cytosolic tails of certain TGN membrane proteins during the sorting/budding process at the prevacuolar compartment. Binds phosphatidylinositol 3-phosphate (PtdIns(P3)). This is Sorting nexin-3 (SNX3) from Yarrowia lipolytica (strain CLIB 122 / E 150) (Yeast).